The following is a 495-amino-acid chain: Cytoplasmic alpha-amylase (495 aa).

Positions 104 and 198 each coordinate Ca(2+). The Nucleophile role is filled by aspartate 235. Position 239 (histidine 239) interacts with Ca(2+). The active-site Proton donor is glutamate 265.

The protein belongs to the glycosyl hydrolase 13 family. Monomer. Requires Ca(2+) as cofactor.

The protein localises to the cytoplasm. It catalyses the reaction Endohydrolysis of (1-&gt;4)-alpha-D-glucosidic linkages in polysaccharides containing three or more (1-&gt;4)-alpha-linked D-glucose units.. The sequence is that of Cytoplasmic alpha-amylase (amyA) from Escherichia coli (strain K12).